The sequence spans 387 residues: Putative gustatory receptor 22d (387 aa).

Over 1–43 (MFRPRCGLRQKFVYVILKSILYSSWLLGIFPFKYEPKKRRLRR) the chain is Cytoplasmic. Residues 44–64 (SMWLILFGVVISSSLLILMVK) traverse the membrane as a helical segment. At 65-82 (QSAEDREHGIMLDVFQRN) the chain is on the extracellular side. The helical transmembrane segment at 83 to 103 (ALLYQISSLMGVVGVVSICTV) threads the bilayer. The Cytoplasmic segment spans residues 104–142 (HLRTLWRSKHLEEIYNGLMLLEAKYFCSNAVECPAFDGY). Residues 143 to 163 (VIQKGVVIVVGLLAPWMVHFG) traverse the membrane as a helical segment. Residues 164 to 184 (MPDSKLPVLNVLVVSMVKLGT) are Extracellular-facing. The helical transmembrane segment at 185-205 (LLLALHYHLGVVIIYRFVWLI) threads the bilayer. Over 206-252 (NRELLSLVCSLRGNHKGSSSRVRFLLKLYNKLVNLYSKLADCYDCQT) the chain is Cytoplasmic. The helical transmembrane segment at 253 to 273 (VLMMAIFLAANIIVCFYMIVY) threads the bilayer. Over 274–281 (RISLSKMS) the chain is Extracellular. The chain crosses the membrane as a helical span at residues 282 to 302 (FFVMLIMFPLAIANNFMDFWL). At 303–363 (SMKVCDLLQK…HCGLFHVNRE (61 aa)) the chain is on the cytoplasmic side. A helical membrane pass occupies residues 364-384 (MGFKMFVASVLYLLYLVQFDY). The Extracellular segment spans residues 385–387 (MNL).

The protein belongs to the insect chemoreceptor superfamily. Gustatory receptor (GR) family. Gr22e subfamily. In terms of tissue distribution, expressed in neurons of the dorsal pharyngeal sense organs of larvae.

Its subcellular location is the cell membrane. Its function is as follows. Probable gustatory receptor which mediates acceptance or avoidance behavior, depending on its substrates. The polypeptide is Putative gustatory receptor 22d (Drosophila melanogaster (Fruit fly)).